The primary structure comprises 471 residues: PTS system mannitol-specific EIICB component (471 aa).

At 1–29 the chain is on the cytoplasmic side; the sequence is MTHTSENQAGFRVKIQRFGSYLSGMIMPN. One can recognise a PTS EIIC type-2 domain in the interval 18 to 342; that stretch reads FGSYLSGMIM…FFVASIFLKS (325 aa). Residues 30-51 traverse the membrane as a helical segment; it reads IGAFIAWGIITALFIPTGWLPN. Over 52 to 55 the chain is Extracellular; it reads ETFA. The chain crosses the membrane as a helical span at residues 56-76; the sequence is KLVGPMITYLLPLLIGYTGGK. Residues 77-139 are Cytoplasmic-facing; the sequence is MIYDVRGGVV…QGFEMLVNNF (63 aa). The chain crosses the membrane as a helical span at residues 140–161; that stretch reads SAGIIGGLLTLAAFKGVGPVVS. The Extracellular segment spans residues 162–170; that stretch reads AISKTLAAG. The helical transmembrane segment at 171 to 191 threads the bilayer; that stretch reads VEKIVDLHLLPLANIFIEPGK. Over 192 to 278 the chain is Cytoplasmic; the sequence is VLFLNNAINH…VLMRPILILA (87 aa). A helical membrane pass occupies residues 279-298; sequence AIAGGVSGVLTFTIFDAGLV. Residues 299 to 318 are Extracellular-facing; the sequence is AVPSPGSIFALLAMTPKGNY. The helical transmembrane segment at 319 to 340 threads the bilayer; the sequence is LGVLAGVLVATAVSFFVASIFL. Topologically, residues 341-471 are cytoplasmic; the sequence is KSAKNNEEDI…YDELIEMLKK (131 aa). The PTS EIIB type-2 domain maps to 383-471; sequence KKIVFACDAG…YDELIEMLKK (89 aa). Catalysis depends on Cys-389, which acts as the Phosphocysteine intermediate; for EIIB activity. Position 389 is a phosphocysteine; by EIIA (Cys-389).

In terms of assembly, homodimer.

The protein resides in the cell membrane. The enzyme catalyses D-mannitol(out) + N(pros)-phospho-L-histidyl-[protein] = D-mannitol 1-phosphate(in) + L-histidyl-[protein]. The phosphoenolpyruvate-dependent sugar phosphotransferase system (sugar PTS), a major carbohydrate active transport system, catalyzes the phosphorylation of incoming sugar substrates concomitantly with their translocation across the cell membrane. The enzyme II CmtAB PTS system is involved in D-mannitol transport. In Geobacillus stearothermophilus (Bacillus stearothermophilus), this protein is PTS system mannitol-specific EIICB component.